Reading from the N-terminus, the 561-residue chain is Potassium-transporting ATPase potassium-binding subunit (561 aa).

The next 10 helical transmembrane spans lie at 4-24 (IVMQ…PLGI), 65-85 (AVSV…VLML), 133-153 (IGLT…LFAV), 177-197 (LYIL…QGVV), 253-273 (FTNL…VVMF), 285-305 (AIMT…TISE), 380-400 (GLYG…LLVG), 417-437 (MVCL…AVAV), 484-504 (MVGA…ALYL), and 528-548 (FIGL…LPAL).

This sequence belongs to the KdpA family. As to quaternary structure, the system is composed of three essential subunits: KdpA, KdpB and KdpC.

Its subcellular location is the cell membrane. In terms of biological role, part of the high-affinity ATP-driven potassium transport (or Kdp) system, which catalyzes the hydrolysis of ATP coupled with the electrogenic transport of potassium into the cytoplasm. This subunit binds the extracellular potassium ions and delivers the ions to the membrane domain of KdpB through an intramembrane tunnel. This chain is Potassium-transporting ATPase potassium-binding subunit, found in Listeria monocytogenes serotype 4b (strain CLIP80459).